Here is a 732-residue protein sequence, read N- to C-terminus: Cyclopenase asqI (732 aa).

Residues His-168, His-172, and His-200 each coordinate Zn(2+).

Belongs to the tyrosinase family. The cofactor is Zn(2+).

The enzyme catalyses (-)-cyclopenine = viridicatin + methyl isocyanate + H(+). It carries out the reaction (-)-4'-methoxycyclopenine = 4'-methoxyviridicatin + methyl isocyanate + H(+). It participates in secondary metabolite biosynthesis. Its pathway is alkaloid biosynthesis. It functions in the pathway mycotoxin biosynthesis. In terms of biological role, cyclopenase; part of the gene cluster that mediates the biosynthesis of the aspoquinolone mycotoxins. Within the pathway, the cyclopenase asqI catalyzes the conversion of 4'-methoxycyclopenin into 4'-methoxyviridicatin. Cyclopenin can also be converted into viridicatin by asqI. The first step of the pathway is catalyzed by the nonribosomal peptide synthetase asqK that condenses anthranilic acid and O-methyl-L-tyrosine to produce 4'-methoxycyclopeptin. 4'-methoxycyclopeptin is then converted to 4'-methoxydehydrocyclopeptin by the ketoglutarate-dependent dioxygenase asqJ. AsqJ also converts its first product 4'-methoxydehydrocyclopeptin to 4'-methoxycyclopenin. The following conversion of 4'-methoxycyclopenin into 4'-methoxyviridicatin is catalyzed by the cyclopenase asqI. 4'-methoxyviridicatin is the precursor of quinolone natural products, and is further converted to quinolinone B. The prenyltransferase asqH1 then catalyzes the canonical Friedel-Crafts alkylation of quinolinone B with dimethylallyl cation to yield dimethylallyl quinolone, which is subjected to FAD-dependent dehydrogenation by the FAD-linked oxidoreductase asqF to yield conjugated aryl diene. The delta(3') double bond then serves as the site of the second alkylation with DMAPP catalyzed by the prenyltransferase asqH2 to yield a carbenium ion intermediate, which can be attacked by H(2)O to yield a styrenyl quinolone containing a C3'-hydroxyprenyl chain. The FAD-dependent monooxygenase asqG performs epoxidation of the terminal C7'-C8' olefin. Finally, after dehydratation of the epoxide at C3 by asqC, the quinolone epoxide rearrangement protein asqO catalyzes an enzymatic 3-exo-tet cyclization to yield the cyclopropyl-THF ring system in aspoquinolone. The protein is Cyclopenase asqI of Emericella nidulans (strain FGSC A4 / ATCC 38163 / CBS 112.46 / NRRL 194 / M139) (Aspergillus nidulans).